The following is a 161-amino-acid chain: Protein-export protein SecB (161 aa).

This sequence belongs to the SecB family. Homotetramer, a dimer of dimers. One homotetramer interacts with 1 SecA dimer.

Its subcellular location is the cytoplasm. Functionally, one of the proteins required for the normal export of preproteins out of the cell cytoplasm. It is a molecular chaperone that binds to a subset of precursor proteins, maintaining them in a translocation-competent state. It also specifically binds to its receptor SecA. This Shewanella baltica (strain OS223) protein is Protein-export protein SecB.